We begin with the raw amino-acid sequence, 190 residues long: Holliday junction branch migration complex subunit RuvA (190 aa).

The domain I stretch occupies residues 1 to 64 (MIGKLTGTLL…EDAQLLYGFG (64 aa)). Residues 65–137 (TAQERQAFRE…LKGKLGADVG (73 aa)) form a domain II region. The interval 137 to 141 (GVRAH) is flexible linker. Residues 142–190 (AANDNQADILQALLALGYNDKEAAAALKALPADVGVSEGIKLALKSLSK) form a domain III region.

Belongs to the RuvA family. In terms of assembly, homotetramer. Forms an RuvA(8)-RuvB(12)-Holliday junction (HJ) complex. HJ DNA is sandwiched between 2 RuvA tetramers; dsDNA enters through RuvA and exits via RuvB. An RuvB hexamer assembles on each DNA strand where it exits the tetramer. Each RuvB hexamer is contacted by two RuvA subunits (via domain III) on 2 adjacent RuvB subunits; this complex drives branch migration. In the full resolvosome a probable DNA-RuvA(4)-RuvB(12)-RuvC(2) complex forms which resolves the HJ.

It localises to the cytoplasm. In terms of biological role, the RuvA-RuvB-RuvC complex processes Holliday junction (HJ) DNA during genetic recombination and DNA repair, while the RuvA-RuvB complex plays an important role in the rescue of blocked DNA replication forks via replication fork reversal (RFR). RuvA specifically binds to HJ cruciform DNA, conferring on it an open structure. The RuvB hexamer acts as an ATP-dependent pump, pulling dsDNA into and through the RuvAB complex. HJ branch migration allows RuvC to scan DNA until it finds its consensus sequence, where it cleaves and resolves the cruciform DNA. The polypeptide is Holliday junction branch migration complex subunit RuvA (Acidovorax ebreus (strain TPSY) (Diaphorobacter sp. (strain TPSY))).